Consider the following 181-residue polypeptide: Major urinary protein (181 aa).

Residues 1-19 form the signal peptide; sequence MKLLLLLLCLGLTLVCGHA. Asn-54 carries N-linked (GlcNAc...) asparagine glycosylation. Cys-83 and Cys-176 are oxidised to a cystine.

Belongs to the calycin superfamily. Lipocalin family. As to expression, abundant in the urine of adult male rats but absent from that of females.

It localises to the cytoplasm. It is found in the cytosol. The protein localises to the secreted. In terms of biological role, major urinary proteins (Mups) bind and release pheromones. They may also protect pheromones from oxidation. In this context, they play a role in the regulation of social behaviors, such as aggression, mating, pup-suckling, territory establishment and dominance. Acts as a kairomone, detected by the prey vomeronasal organ and inducing fear reactions in mice. This Rattus norvegicus (Rat) protein is Major urinary protein.